Here is a 111-residue protein sequence, read N- to C-terminus: UPF0145 protein RBAM_010660 (111 aa).

The protein belongs to the UPF0145 family.

The sequence is that of UPF0145 protein RBAM_010660 from Bacillus velezensis (strain DSM 23117 / BGSC 10A6 / LMG 26770 / FZB42) (Bacillus amyloliquefaciens subsp. plantarum).